The sequence spans 452 residues: Eukaryotic translation initiation factor 3 subunit E (452 aa).

The 170-residue stretch at 257 to 426 (TDLFFSPAYI…GTVIMNHPPQ (170 aa)) folds into the PCI domain.

This sequence belongs to the eIF-3 subunit E family. In terms of assembly, component of the eukaryotic translation initiation factor 3 (eIF-3) complex.

Its subcellular location is the cytoplasm. Its function is as follows. Component of the eukaryotic translation initiation factor 3 (eIF-3) complex, which is involved in protein synthesis of a specialized repertoire of mRNAs and, together with other initiation factors, stimulates binding of mRNA and methionyl-tRNAi to the 40S ribosome. The eIF-3 complex specifically targets and initiates translation of a subset of mRNAs involved in cell proliferation. The protein is Eukaryotic translation initiation factor 3 subunit E (int6) of Aspergillus niger (strain ATCC MYA-4892 / CBS 513.88 / FGSC A1513).